The chain runs to 150 residues: Ribosome maturation factor RimP (150 aa).

It belongs to the RimP family.

The protein resides in the cytoplasm. Its function is as follows. Required for maturation of 30S ribosomal subunits. The polypeptide is Ribosome maturation factor RimP (Francisella philomiragia subsp. philomiragia (strain ATCC 25017 / CCUG 19701 / FSC 153 / O#319-036)).